The primary structure comprises 289 residues: Enoyl-CoA delta isomerase 1, mitochondrial (289 aa).

Residues 1-28 constitute a mitochondrion transit peptide; the sequence is MALAAARRLLLHAGSRLGRREAVDGARR. K48 carries the post-translational modification N6-acetyllysine; alternate. Residue K48 is modified to N6-succinyllysine; alternate. Residue K71 is modified to N6-succinyllysine. Position 76 is an N6-acetyllysine (K76). Residues 93 to 97, G140, and N164 each bind substrate; that span reads AGLDL. An N6-acetyllysine; alternate mark is found at K222, K229, K255, and K270. Residues K222, K229, K255, and K270 each carry the N6-succinyllysine; alternate modification. Position 275 is an N6-succinyllysine (K275). K283 carries the post-translational modification N6-acetyllysine; alternate. The residue at position 283 (K283) is an N6-succinyllysine; alternate.

The protein belongs to the enoyl-CoA hydratase/isomerase family. Homotrimer.

The protein localises to the mitochondrion matrix. The catalysed reaction is a (3Z)-enoyl-CoA = a 4-saturated (2E)-enoyl-CoA. It catalyses the reaction a (3E)-enoyl-CoA = a 4-saturated (2E)-enoyl-CoA. The enzyme catalyses (3Z)-octenoyl-CoA = (2E)-octenoyl-CoA. It carries out the reaction (2E)-tetradecenoyl-CoA = (3Z)-tetradecenoyl-CoA. The catalysed reaction is (3Z)-dodecenoyl-CoA = (2E)-dodecenoyl-CoA. It catalyses the reaction (3Z)-hexenoyl-CoA = (2E)-hexenoyl-CoA. The enzyme catalyses (3Z)-decenoyl-CoA = (2E)-decenoyl-CoA. Its pathway is lipid metabolism; fatty acid beta-oxidation. Its function is as follows. Key enzyme of fatty acid beta-oxidation. Able to isomerize both 3-cis (3Z) and 3-trans (3E) double bonds into the 2-trans (2E) form in a range of enoyl-CoA species, with a preference for (3Z)-enoyl-CoAs over (3E)-enoyl-CoAs. The catalytic efficiency of this enzyme is not affected by the fatty acyl chain length. In Mus musculus (Mouse), this protein is Enoyl-CoA delta isomerase 1, mitochondrial.